The primary structure comprises 259 residues: Dihydroorotate dehydrogenase B (NAD(+)), electron transfer subunit (259 aa).

The FAD-binding FR-type domain maps to 2-102 (MQKQNMIVVN…LGPLGHGFPV (101 aa)). FAD-binding positions include 53-56 (RPIS), 70-72 (LYR), and 77-78 (GT). Residues C221, C226, C229, and C246 each contribute to the [2Fe-2S] cluster site.

It belongs to the PyrK family. Heterotetramer of 2 PyrK and 2 PyrD type B subunits. It depends on [2Fe-2S] cluster as a cofactor. FAD serves as cofactor.

Its pathway is pyrimidine metabolism; UMP biosynthesis via de novo pathway; orotate from (S)-dihydroorotate (NAD(+) route): step 1/1. Its function is as follows. Responsible for channeling the electrons from the oxidation of dihydroorotate from the FMN redox center in the PyrD type B subunit to the ultimate electron acceptor NAD(+). The chain is Dihydroorotate dehydrogenase B (NAD(+)), electron transfer subunit from Bacillus cereus (strain G9842).